Consider the following 311-residue polypeptide: Cytosolic Fe-S cluster assembly factor Nubp1 homolog (311 aa).

The disordered stretch occupies residues 1–21 (MQAPPPEHCPGVESEDAGKGS). Cysteine 9, cysteine 23, cysteine 26, and cysteine 32 together coordinate [4Fe-4S] cluster. 63–70 (GKGGVGKS) contacts ATP. [4Fe-4S] cluster contacts are provided by cysteine 240 and cysteine 243.

The protein belongs to the Mrp/NBP35 ATP-binding proteins family. NUBP1/NBP35 subfamily. As to quaternary structure, heterotetramer of 2 Nubp1 and 2 Nubp2 chains. Requires [4Fe-4S] cluster as cofactor.

The protein localises to the cytoplasm. Its function is as follows. Component of the cytosolic iron-sulfur (Fe/S) protein assembly (CIA) machinery. Required for maturation of extramitochondrial Fe-S proteins. The Nubp1-Nubp2 heterotetramer forms a Fe-S scaffold complex, mediating the de novo assembly of an Fe-S cluster and its transfer to target apoproteins. This is Cytosolic Fe-S cluster assembly factor Nubp1 homolog from Drosophila sechellia (Fruit fly).